Here is a 283-residue protein sequence, read N- to C-terminus: Thymidylate synthase (283 aa).

A dUMP-binding site is contributed by arginine 22. The Nucleophile role is filled by cysteine 160. DUMP-binding positions include 180 to 183, asparagine 191, and 221 to 223; these read RSCD and HIY. (6R)-5,10-methylene-5,6,7,8-tetrahydrofolate is bound at residue aspartate 183. (6R)-5,10-methylene-5,6,7,8-tetrahydrofolate is bound at residue serine 282.

The protein belongs to the thymidylate synthase family. Bacterial-type ThyA subfamily. As to quaternary structure, homodimer.

Its subcellular location is the cytoplasm. The catalysed reaction is dUMP + (6R)-5,10-methylene-5,6,7,8-tetrahydrofolate = 7,8-dihydrofolate + dTMP. The protein operates within pyrimidine metabolism; dTTP biosynthesis. Catalyzes the reductive methylation of 2'-deoxyuridine-5'-monophosphate (dUMP) to 2'-deoxythymidine-5'-monophosphate (dTMP) while utilizing 5,10-methylenetetrahydrofolate (mTHF) as the methyl donor and reductant in the reaction, yielding dihydrofolate (DHF) as a by-product. This enzymatic reaction provides an intracellular de novo source of dTMP, an essential precursor for DNA biosynthesis. The protein is Thymidylate synthase of Haemophilus influenzae (strain 86-028NP).